Reading from the N-terminus, the 222-residue chain is MRVKICGFTDPGQAQAAARLGVHALGFVCVPGTPRYVDAARLREIAAALPPFTFKVGVFVDAPVEAMRAAVEAGELQGVQLHGEESPETCAHLARTLPGILRIKALRVREPADLEKIALYVDAIEAVLLDAWHPTQAGGTGRTLDWKALQGFCPALPWMLSGGLRADNLAQALDILTPDAVDLSSGVENGVPGQKDLSKITQILHIAQGNTGQRRPPLCDGT.

This sequence belongs to the TrpF family.

It catalyses the reaction N-(5-phospho-beta-D-ribosyl)anthranilate = 1-(2-carboxyphenylamino)-1-deoxy-D-ribulose 5-phosphate. It participates in amino-acid biosynthesis; L-tryptophan biosynthesis; L-tryptophan from chorismate: step 3/5. The protein is N-(5'-phosphoribosyl)anthranilate isomerase of Gloeobacter violaceus (strain ATCC 29082 / PCC 7421).